Here is a 328-residue protein sequence, read N- to C-terminus: Tetraacyldisaccharide 4'-kinase (328 aa).

Residue 55-62 (TAGGNGKT) coordinates ATP.

Belongs to the LpxK family.

It carries out the reaction a lipid A disaccharide + ATP = a lipid IVA + ADP + H(+). It participates in glycolipid biosynthesis; lipid IV(A) biosynthesis; lipid IV(A) from (3R)-3-hydroxytetradecanoyl-[acyl-carrier-protein] and UDP-N-acetyl-alpha-D-glucosamine: step 6/6. In terms of biological role, transfers the gamma-phosphate of ATP to the 4'-position of a tetraacyldisaccharide 1-phosphate intermediate (termed DS-1-P) to form tetraacyldisaccharide 1,4'-bis-phosphate (lipid IVA). The protein is Tetraacyldisaccharide 4'-kinase of Shigella dysenteriae serotype 1 (strain Sd197).